Reading from the N-terminus, the 176-residue chain is ATP-dependent protease subunit HslV (176 aa).

Threonine 5 is an active-site residue. Na(+) contacts are provided by serine 161, cysteine 164, and threonine 167.

This sequence belongs to the peptidase T1B family. HslV subfamily. A double ring-shaped homohexamer of HslV is capped on each side by a ring-shaped HslU homohexamer. The assembly of the HslU/HslV complex is dependent on binding of ATP.

The protein localises to the cytoplasm. The catalysed reaction is ATP-dependent cleavage of peptide bonds with broad specificity.. Its activity is regulated as follows. Allosterically activated by HslU binding. Functionally, protease subunit of a proteasome-like degradation complex believed to be a general protein degrading machinery. The chain is ATP-dependent protease subunit HslV from Caldanaerobacter subterraneus subsp. tengcongensis (strain DSM 15242 / JCM 11007 / NBRC 100824 / MB4) (Thermoanaerobacter tengcongensis).